The primary structure comprises 343 residues: S-adenosylmethionine:tRNA ribosyltransferase-isomerase (343 aa).

This sequence belongs to the QueA family. As to quaternary structure, monomer.

It localises to the cytoplasm. The catalysed reaction is 7-aminomethyl-7-carbaguanosine(34) in tRNA + S-adenosyl-L-methionine = epoxyqueuosine(34) in tRNA + adenine + L-methionine + 2 H(+). Its pathway is tRNA modification; tRNA-queuosine biosynthesis. Transfers and isomerizes the ribose moiety from AdoMet to the 7-aminomethyl group of 7-deazaguanine (preQ1-tRNA) to give epoxyqueuosine (oQ-tRNA). The polypeptide is S-adenosylmethionine:tRNA ribosyltransferase-isomerase (Syntrophotalea carbinolica (strain DSM 2380 / NBRC 103641 / GraBd1) (Pelobacter carbinolicus)).